Consider the following 365-residue polypeptide: tRNA-specific 2-thiouridylase MnmA (365 aa).

ATP-binding positions include 12–19 and M38; that span reads AMSGGVDS. C108 serves as the catalytic Nucleophile. C108 and C206 are disulfide-bonded. G132 is a binding site for ATP. Positions 156 to 158 are interaction with tRNA; that stretch reads KDQ. Catalysis depends on C206, which acts as the Cysteine persulfide intermediate. The interaction with tRNA stretch occupies residues 312-313; it reads RY.

This sequence belongs to the MnmA/TRMU family.

It is found in the cytoplasm. The enzyme catalyses S-sulfanyl-L-cysteinyl-[protein] + uridine(34) in tRNA + AH2 + ATP = 2-thiouridine(34) in tRNA + L-cysteinyl-[protein] + A + AMP + diphosphate + H(+). Catalyzes the 2-thiolation of uridine at the wobble position (U34) of tRNA, leading to the formation of s(2)U34. This is tRNA-specific 2-thiouridylase MnmA from Carboxydothermus hydrogenoformans (strain ATCC BAA-161 / DSM 6008 / Z-2901).